A 750-amino-acid polypeptide reads, in one-letter code: Photosystem I P700 chlorophyll a apoprotein A1 (750 aa).

Transmembrane regions (helical) follow at residues 70-93, 156-179, 195-219, 291-309, 346-369, 385-411, 433-455, and 531-549; these read VFSA…FHGA, LYCT…FHYH, LNHH…HVSL, IAHH…GHMY, WHAQ…HHMY, LSLF…IFMV, AIIS…LYIH, and FLVH…LILL. [4Fe-4S] cluster contacts are provided by cysteine 573 and cysteine 582. Transmembrane regions (helical) follow at residues 589–610 and 664–686; these read HVFL…HFSW and LSAY…MFLF. Histidine 675 contributes to the chlorophyll a' binding site. Chlorophyll a-binding residues include methionine 683 and tyrosine 691. Tryptophan 692 contributes to the phylloquinone binding site. A helical membrane pass occupies residues 724–744; the sequence is AVGVTHYLLGGIATTWAFFLA.

The protein belongs to the PsaA/PsaB family. In terms of assembly, the PsaA/B heterodimer binds the P700 chlorophyll special pair and subsequent electron acceptors. PSI consists of a core antenna complex that captures photons, and an electron transfer chain that converts photonic excitation into a charge separation. The eukaryotic PSI reaction center is composed of at least 11 subunits. The cofactor is P700 is a chlorophyll a/chlorophyll a' dimer, A0 is one or more chlorophyll a, A1 is one or both phylloquinones and FX is a shared 4Fe-4S iron-sulfur center..

It localises to the plastid. The protein resides in the chloroplast thylakoid membrane. It carries out the reaction reduced [plastocyanin] + hnu + oxidized [2Fe-2S]-[ferredoxin] = oxidized [plastocyanin] + reduced [2Fe-2S]-[ferredoxin]. Its function is as follows. PsaA and PsaB bind P700, the primary electron donor of photosystem I (PSI), as well as the electron acceptors A0, A1 and FX. PSI is a plastocyanin-ferredoxin oxidoreductase, converting photonic excitation into a charge separation, which transfers an electron from the donor P700 chlorophyll pair to the spectroscopically characterized acceptors A0, A1, FX, FA and FB in turn. Oxidized P700 is reduced on the lumenal side of the thylakoid membrane by plastocyanin. The protein is Photosystem I P700 chlorophyll a apoprotein A1 of Phalaenopsis aphrodite subsp. formosana (Moth orchid).